A 378-amino-acid chain; its full sequence is UPF0284 protein MK0224 (378 aa).

Belongs to the UPF0284 family.

The protein is UPF0284 protein MK0224 of Methanopyrus kandleri (strain AV19 / DSM 6324 / JCM 9639 / NBRC 100938).